Here is a 302-residue protein sequence, read N- to C-terminus: Proteasome subunit beta (302 aa).

Over residues 1–10 (MAGRVREVSH) the composition is skewed to basic and acidic residues. The tract at residues 1-21 (MAGRVREVSHSSDQSGRLPAA) is disordered. Positions 1–67 (MAGRVREVSH…GPGAGEPPHA (67 aa)) are cleaved as a propeptide — removed in mature form; by autocatalysis. Residue Thr-68 is the Nucleophile of the active site. Residues 283–302 (RRGNPGGNPGISAVHGDGGN) are disordered.

It belongs to the peptidase T1B family. The 20S proteasome core is composed of 14 alpha and 14 beta subunits that assemble into four stacked heptameric rings, resulting in a barrel-shaped structure. The two inner rings, each composed of seven catalytic beta subunits, are sandwiched by two outer rings, each composed of seven alpha subunits. The catalytic chamber with the active sites is on the inside of the barrel. Has a gated structure, the ends of the cylinder being occluded by the N-termini of the alpha-subunits. Is capped by the proteasome-associated ATPase, ARC.

The protein localises to the cytoplasm. The enzyme catalyses Cleavage of peptide bonds with very broad specificity.. It participates in protein degradation; proteasomal Pup-dependent pathway. Its activity is regulated as follows. The formation of the proteasomal ATPase ARC-20S proteasome complex, likely via the docking of the C-termini of ARC into the intersubunit pockets in the alpha-rings, may trigger opening of the gate for substrate entry. Interconversion between the open-gate and close-gate conformations leads to a dynamic regulation of the 20S proteasome proteolysis activity. Functionally, component of the proteasome core, a large protease complex with broad specificity involved in protein degradation. This is Proteasome subunit beta from Kineococcus radiotolerans (strain ATCC BAA-149 / DSM 14245 / SRS30216).